Here is a 77-residue protein sequence, read N- to C-terminus: UPF0337 protein CE0198 (77 aa).

Residues 1–77 (MGDLSNKAEG…PDVEHPEAVN (77 aa)) form a disordered region. Composition is skewed to basic and acidic residues over residues 30-56 (DEGRADQTKADIKEAVSDAGDKIKDGA) and 64-77 (QDKDPDVEHPEAVN).

Belongs to the UPF0337 (CsbD) family.

The protein is UPF0337 protein CE0198 of Corynebacterium efficiens (strain DSM 44549 / YS-314 / AJ 12310 / JCM 11189 / NBRC 100395).